The chain runs to 115 residues: U3-lycotoxin-Ls1d (115 aa).

Positions 1-20 (MKFVLLFGVLLVTLFSYSSA) are cleaved as a signal peptide. Positions 21-44 (EMLDDFDQADEDELLSLIEKEEAR) are excised as a propeptide. 4 cysteine pairs are disulfide-bonded: C48/C63, C55/C72, C62/C87, and C74/C85.

Belongs to the neurotoxin 19 (CSTX) family. 01 subfamily. Expressed by the venom gland.

It is found in the secreted. The protein is U3-lycotoxin-Ls1d of Lycosa singoriensis (Wolf spider).